The sequence spans 65 residues: UPF0434 protein RPD_0454 (65 aa).

This sequence belongs to the UPF0434 family.

This Rhodopseudomonas palustris (strain BisB5) protein is UPF0434 protein RPD_0454.